The primary structure comprises 153 residues: Aspartate carbamoyltransferase regulatory chain (153 aa).

Residues C109, C114, C138, and C141 each contribute to the Zn(2+) site.

Belongs to the PyrI family. In terms of assembly, contains catalytic and regulatory chains. Zn(2+) serves as cofactor.

Functionally, involved in allosteric regulation of aspartate carbamoyltransferase. The chain is Aspartate carbamoyltransferase regulatory chain from Vibrio vulnificus (strain YJ016).